The sequence spans 383 residues: AP-1-like transcription factor YAP6 (383 aa).

Disordered regions lie at residues 1–64 (MQNP…ISVN), 83–113 (DYRS…SYNR), and 168–239 (TLPS…KAFR). Over residues 13–64 (NQGSSSMATYNASEKNLNEHPSPQIAQPSTSQKLPYRINPTTTNGDTDISVN) the composition is skewed to polar residues. A compositionally biased stretch (low complexity) spans 88–101 (HQSPIHPSYIIPPH). The segment covering 168–184 (TLPSRNTSVTTAPPSFQ) has biased composition (polar residues). Over residues 185–206 (NSADTAKNSADNNDNNDNVTKP) the composition is skewed to low complexity. Positions 213–222 (QLISSSGKTL) are enriched in polar residues. The bZIP domain maps to 221–284 (TLRNTRRAAQ…NDNNILIAQH (64 aa)). The basic motif stretch occupies residues 223–247 (RNTRRAAQNRTAQKAFRQRKEKYIK). Residues 227–237 (RAAQNRTAQKA) are compositionally biased toward low complexity. Positions 249 to 277 (LEQKSKIFDDLLAENNNFKSLNDSLRNDN) are leucine-zipper.

It belongs to the bZIP family. YAP subfamily. Homodimer.

It is found in the nucleus. In terms of biological role, transcription activator involved in the regulation of genes expressed in response to environmental changes and metabolic requirements. According to genome-wide promoter binding and gene expression studies it regulates, among others, genes involved in ribosome biogenesis, protein synthesis, carbohydrate metabolism, and carbohydrate transport. It may also be involved in pleiotropic drug resistance. When overexpressed, it confers resistance to cisplatin, methylmethanosulfonate, and mitomycin C, and increases cellular tolerance to sodium and lithium. This is AP-1-like transcription factor YAP6 (YAP6) from Saccharomyces cerevisiae (strain ATCC 204508 / S288c) (Baker's yeast).